We begin with the raw amino-acid sequence, 133 residues long: Putative actin-depolymerizing factor 11 (133 aa).

Residues 1–133 (MVLHDDCKLT…SLDAIRRRIN (133 aa)) form the ADF-H domain.

The protein belongs to the actin-binding proteins ADF family.

It localises to the cytoplasm. Its subcellular location is the cytoskeleton. In terms of biological role, actin-depolymerizing protein. Severs actin filaments (F-actin) and binds to actin monomers. The polypeptide is Putative actin-depolymerizing factor 11 (ADF11) (Arabidopsis thaliana (Mouse-ear cress)).